Here is a 549-residue protein sequence, read N- to C-terminus: Undecaprenyl phosphate-alpha-4-amino-4-deoxy-L-arabinose arabinosyl transferase (549 aa).

12 helical membrane passes run 9 to 29 (LLLIAFGLFYLVPLSNHGLWI), 80 to 100 (LFGVRIASVVATALSVLLAYL), 112 to 132 (SLACALLYASFGLIAGQSGYA), 136 to 156 (PQFTFWVNLSLVALWYALDAG), 176 to 196 (FLTKGFLAWLLPVLVALPYML), 204 to 224 (LLGYGALAVLVALLVCLPWAL), 256 to 276 (PWWFYLPLLAVACLPWSGLLP), 288 to 308 (QPPVAFLALWLLLPLAFFSLS), 312 to 332 (LPTYIMPCLLPLALLMGHALV), 346 to 366 (NGLLNLGLALLALAALAYLQL), 376 to 396 (FELFLVLLVIGAWAAAGLAQW), and 402 to 422 (AWAAPLLASWVLIALLPAAMP).

It belongs to the glycosyltransferase 83 family.

Its subcellular location is the cell inner membrane. It carries out the reaction 4-amino-4-deoxy-alpha-L-arabinopyranosyl di-trans,octa-cis-undecaprenyl phosphate + lipid IVA = lipid IIA + di-trans,octa-cis-undecaprenyl phosphate.. It functions in the pathway lipopolysaccharide metabolism; 4-amino-4-deoxy-beta-L-arabinose-lipid A biosynthesis. Its function is as follows. Catalyzes the transfer of the L-Ara4N moiety of the glycolipid undecaprenyl phosphate-alpha-L-Ara4N to lipid A. The modified arabinose is attached to lipid A and is required for resistance to polymyxin and cationic antimicrobial peptides. The polypeptide is Undecaprenyl phosphate-alpha-4-amino-4-deoxy-L-arabinose arabinosyl transferase (Pseudomonas paraeruginosa (strain DSM 24068 / PA7) (Pseudomonas aeruginosa (strain PA7))).